We begin with the raw amino-acid sequence, 304 residues long: UDP-N-acetylenolpyruvoylglucosamine reductase (304 aa).

One can recognise an FAD-binding PCMH-type domain in the interval 34–198 (IGGKADFLVW…LEVVFALQPG (165 aa)). The active site involves Arg177. Catalysis depends on Ser227, which acts as the Proton donor. Residue Glu297 is part of the active site.

The protein belongs to the MurB family. Requires FAD as cofactor.

The protein localises to the cytoplasm. It catalyses the reaction UDP-N-acetyl-alpha-D-muramate + NADP(+) = UDP-N-acetyl-3-O-(1-carboxyvinyl)-alpha-D-glucosamine + NADPH + H(+). It participates in cell wall biogenesis; peptidoglycan biosynthesis. Cell wall formation. This is UDP-N-acetylenolpyruvoylglucosamine reductase from Geobacillus thermodenitrificans (strain NG80-2).